Consider the following 197-residue polypeptide: GTP cyclohydrolase-2 (197 aa).

50–54 (RIHSE) provides a ligand contact to GTP. Zn(2+) is bound by residues C55, C66, and C68. Residues Q71, 93–95 (EGR), and T115 contribute to the GTP site. The active-site Proton acceptor is D127. R129 serves as the catalytic Nucleophile. 2 residues coordinate GTP: T150 and K155.

This sequence belongs to the GTP cyclohydrolase II family. Requires Zn(2+) as cofactor.

It catalyses the reaction GTP + 4 H2O = 2,5-diamino-6-hydroxy-4-(5-phosphoribosylamino)-pyrimidine + formate + 2 phosphate + 3 H(+). Its pathway is cofactor biosynthesis; riboflavin biosynthesis; 5-amino-6-(D-ribitylamino)uracil from GTP: step 1/4. Its function is as follows. Catalyzes the conversion of GTP to 2,5-diamino-6-ribosylamino-4(3H)-pyrimidinone 5'-phosphate (DARP), formate and pyrophosphate. The polypeptide is GTP cyclohydrolase-2 (Neisseria meningitidis serogroup A / serotype 4A (strain DSM 15465 / Z2491)).